The sequence spans 160 residues: Major strawberry allergen Fra a 1.04 (160 aa).

The protein belongs to the BetVI family. Post-translationally, phosphorylated in vivo. Phosphorylation prevents its activity as ribonuclease. As to expression, highly expressed in roots. Expressed a low levels in ripe red fruits.

Possesses ribonuclease activity in vitro. In Fragaria ananassa (Strawberry), this protein is Major strawberry allergen Fra a 1.04.